A 116-amino-acid polypeptide reads, in one-letter code: MTNHKLIEAVTKSQLRTDLPSFRPGDTLRVHVRIIEGTRERIQVFEGIVIKRRGGGVSETFTVRKISSGVGVERTFPLHTPKIEKIEVKRRGKVRRAKLYYLRSLRGKAARIQEIR.

This sequence belongs to the bacterial ribosomal protein bL19 family.

This protein is located at the 30S-50S ribosomal subunit interface and may play a role in the structure and function of the aminoacyl-tRNA binding site. This Staphylococcus aureus (strain Mu3 / ATCC 700698) protein is Large ribosomal subunit protein bL19.